The chain runs to 288 residues: Signal recognition particle receptor FtsY (288 aa).

Residues 93-100 (GINGTGKT), 175-179 (DTAGR), and 233-236 (TKLD) each bind GTP.

It belongs to the GTP-binding SRP family. FtsY subfamily. As to quaternary structure, part of the signal recognition particle protein translocation system, which is composed of SRP and FtsY.

It localises to the cell membrane. The protein localises to the cytoplasm. It catalyses the reaction GTP + H2O = GDP + phosphate + H(+). Involved in targeting and insertion of nascent membrane proteins into the cytoplasmic membrane. Acts as a receptor for the complex formed by the signal recognition particle (SRP) and the ribosome-nascent chain (RNC). This Thermoplasma acidophilum (strain ATCC 25905 / DSM 1728 / JCM 9062 / NBRC 15155 / AMRC-C165) protein is Signal recognition particle receptor FtsY.